A 203-amino-acid polypeptide reads, in one-letter code: Dephospho-CoA kinase (203 aa).

Positions 5 to 203 constitute a DPCK domain; it reads IVGLTGGIAS…VVYRVAASEH (199 aa). ATP is bound at residue 13-18; sequence ASGKSA.

This sequence belongs to the CoaE family.

Its subcellular location is the cytoplasm. It carries out the reaction 3'-dephospho-CoA + ATP = ADP + CoA + H(+). The protein operates within cofactor biosynthesis; coenzyme A biosynthesis; CoA from (R)-pantothenate: step 5/5. Catalyzes the phosphorylation of the 3'-hydroxyl group of dephosphocoenzyme A to form coenzyme A. This Xanthomonas euvesicatoria pv. vesicatoria (strain 85-10) (Xanthomonas campestris pv. vesicatoria) protein is Dephospho-CoA kinase.